Here is a 180-residue protein sequence, read N- to C-terminus: ATP-dependent protease subunit HslV (180 aa).

The active site involves Thr6. Positions 164, 167, and 170 each coordinate Na(+).

Belongs to the peptidase T1B family. HslV subfamily. A double ring-shaped homohexamer of HslV is capped on each side by a ring-shaped HslU homohexamer. The assembly of the HslU/HslV complex is dependent on binding of ATP.

It is found in the cytoplasm. The enzyme catalyses ATP-dependent cleavage of peptide bonds with broad specificity.. Its activity is regulated as follows. Allosterically activated by HslU binding. Its function is as follows. Protease subunit of a proteasome-like degradation complex believed to be a general protein degrading machinery. This chain is ATP-dependent protease subunit HslV, found in Borrelia recurrentis (strain A1).